We begin with the raw amino-acid sequence, 734 residues long: Monosaccharide-sensing protein 1 (734 aa).

Helical transmembrane passes span 6-26, 44-64, 79-99, 102-122, 133-153, and 163-183; these read LVAL…ATIA, GLVV…SGPI, VMYF…VLCF, LLNG…ISET, TLPQ…VFTM, and AMLG…VFYL. The disordered stretch occupies residues 351–403; the sequence is YNKDNDDYATDDGAGDDDDSDNDLRSPLMSRQTTSMDKDMIPHPTSGSTLSMR. Acidic residues predominate over residues 357 to 371; that stretch reads DYATDDGAGDDDDSD. Phosphoserine occurs at positions 446 and 480. Transmembrane regions (helical) follow at residues 510 to 530, 556 to 576, 588 to 608, 621 to 641, 653 to 673, and 680 to 700; these read ALVV…NGVL, ASFL…VVAM, LLWT…SELI, GCVV…PNIL, LCIA…TYSL, and IGLV…WIFV.

This sequence belongs to the major facilitator superfamily. Sugar transporter (TC 2.A.1.1) family. Binds to VIK at the tonoplast. Phosphorylated by VIK; this activation promotes carrier activity. In terms of tissue distribution, mostly expressed in juvenile and adult leaves, to a lower extent, in flower tissues, and, at low levels, in roots and stems.

It localises to the vacuole membrane. The catalysed reaction is D-glucose(out) + H(+)(in) = D-glucose(in) + H(+)(out). It carries out the reaction sucrose(out) + H(+)(in) = sucrose(in) + H(+)(out). Its activity is regulated as follows. Enhanced activation by VIK-mediated phosphorylation promoting carrier activity and consequently vacuolar sugar accumulation. Sugar proton-coupled antiporter which contributes to vacuolar sugar import (e.g. monosaccharides including glucose, sucrose and fructose), particularly during stress responses (e.g. in response to cold). Required for cytosolic glucose homeostasis. The polypeptide is Monosaccharide-sensing protein 1 (Arabidopsis thaliana (Mouse-ear cress)).